The primary structure comprises 317 residues: Ribonuclease Z (317 aa).

Zn(2+) is bound by residues His61, His63, Asp65, His66, His139, Asp210, and His268. Asp65 (proton acceptor) is an active-site residue.

It belongs to the RNase Z family. In terms of assembly, homodimer. It depends on Zn(2+) as a cofactor.

It catalyses the reaction Endonucleolytic cleavage of RNA, removing extra 3' nucleotides from tRNA precursor, generating 3' termini of tRNAs. A 3'-hydroxy group is left at the tRNA terminus and a 5'-phosphoryl group is left at the trailer molecule.. Its activity is regulated as follows. Inhibited by high salt concentrations. In terms of biological role, zinc phosphodiesterase, which displays some tRNA 3'-processing endonuclease activity. Probably involved in tRNA maturation, by removing a 3'-trailer from precursor tRNA. Can also catalyze the 5' end cleavage of the 5S rRNA. This is Ribonuclease Z from Haloferax volcanii (strain ATCC 29605 / DSM 3757 / JCM 8879 / NBRC 14742 / NCIMB 2012 / VKM B-1768 / DS2) (Halobacterium volcanii).